Reading from the N-terminus, the 489-residue chain is Para-nitrobenzyl esterase (489 aa).

Ser189 acts as the Acyl-ester intermediate in catalysis. Residue Ser189 is modified to Phosphoserine. Residues Glu310 and His399 each act as charge relay system in the active site.

It belongs to the type-B carboxylesterase/lipase family. In terms of assembly, monomer.

Functionally, catalyzes hydrolysis of several beta-lactam antibiotic PNB esters to the corresponding free acid and PNB alcohol. This is Para-nitrobenzyl esterase (pnbA) from Bacillus subtilis (strain 168).